Here is a 212-residue protein sequence, read N- to C-terminus: NADH-quinone oxidoreductase subunit I (212 aa).

2 consecutive 4Fe-4S ferredoxin-type domains span residues Arg-76 to Asp-105 and Leu-115 to Leu-144. Residues Cys-85, Cys-88, Cys-91, Cys-95, Cys-124, Cys-127, Cys-130, and Cys-134 each coordinate [4Fe-4S] cluster.

Belongs to the complex I 23 kDa subunit family. In terms of assembly, NDH-1 is composed of 14 different subunits. Subunits NuoA, H, J, K, L, M, N constitute the membrane sector of the complex. [4Fe-4S] cluster serves as cofactor.

It is found in the cell inner membrane. It carries out the reaction a quinone + NADH + 5 H(+)(in) = a quinol + NAD(+) + 4 H(+)(out). Functionally, NDH-1 shuttles electrons from NADH, via FMN and iron-sulfur (Fe-S) centers, to quinones in the respiratory chain. The immediate electron acceptor for the enzyme in this species is believed to be ubiquinone. Couples the redox reaction to proton translocation (for every two electrons transferred, four hydrogen ions are translocated across the cytoplasmic membrane), and thus conserves the redox energy in a proton gradient. The polypeptide is NADH-quinone oxidoreductase subunit I (Helicobacter hepaticus (strain ATCC 51449 / 3B1)).